Here is a 365-residue protein sequence, read N- to C-terminus: Glutamate 5-kinase 1 (365 aa).

Lysine 9 contributes to the ATP binding site. Substrate-binding residues include serine 49, aspartate 136, and asparagine 148. Residues 168 to 169 and 210 to 216 each bind ATP; these read TD and TGGMKSK. Positions 276-353 constitute a PUA domain; that stretch reads SGEIIIDAGA…DELDFEKTFE (78 aa).

Belongs to the glutamate 5-kinase family.

The protein resides in the cytoplasm. It catalyses the reaction L-glutamate + ATP = L-glutamyl 5-phosphate + ADP. It functions in the pathway amino-acid biosynthesis; L-proline biosynthesis; L-glutamate 5-semialdehyde from L-glutamate: step 1/2. Catalyzes the transfer of a phosphate group to glutamate to form L-glutamate 5-phosphate. In Bacillus subtilis (strain 168), this protein is Glutamate 5-kinase 1.